The sequence spans 729 residues: Replication restart protein PriA (729 aa).

The Helicase ATP-binding domain occupies 209-376; sequence QTALGRFRSF…QSGAYRLLQL (168 aa). Residue 222–229 coordinates ATP; sequence GITGSGKT. Positions 319 to 322 match the DEAH box motif; that stretch reads DEEH. Residues Cys436, Cys439, Cys445, Cys448, Cys463, Cys466, Cys476, and Cys479 each coordinate Zn(2+). A Helicase C-terminal domain is found at 471–623; sequence PIPFKCPDCG…YAVFAENELN (153 aa).

Belongs to the helicase family. PriA subfamily. In terms of assembly, interacts with PriB with high affinity in the absence of DNA. Component of the replication restart primosome. Requires Zn(2+) as cofactor.

The enzyme catalyses Couples ATP hydrolysis with the unwinding of duplex DNA by translocating in the 3'-5' direction.. It catalyses the reaction ATP + H2O = ADP + phosphate + H(+). Its activity is regulated as follows. Helicase and ATPase activities on forked DNA are stimulated by PriB; E.coli PriB does not stimulate this helicase. PriA:PriB complex-catalyzed duplex DNA winding is inhibited by CGS 15943 (CHEBI:131351). CGS 15943 decreases ATP hydrolysis and decreases PriA's affinity for DNA. Functionally, initiates the restart of stalled replication forks, which reloads the replicative helicase on sites other than the origin of replication. Recognizes and binds to abandoned replication forks and remodels them to uncover a helicase loading site. Promotes assembly of the primosome at these replication forks. DNA helicase with greatest unwinding activity on forked DNA substrates with relatively short duplex lagging strand arms. A DNA-dependent ATPase. Required for DNA transformation and DNA repair. Binds single-stranded (ss)DNA and replication fork-like DNA but not double-stranded (ds)DNA. This Neisseria gonorrhoeae (strain ATCC 700825 / FA 1090) protein is Replication restart protein PriA.